Consider the following 417-residue polypeptide: Sulfate adenylyltransferase (417 aa).

It belongs to the sulfate adenylyltransferase family.

It carries out the reaction sulfate + ATP + H(+) = adenosine 5'-phosphosulfate + diphosphate. It functions in the pathway sulfur metabolism; hydrogen sulfide biosynthesis; sulfite from sulfate: step 1/3. The chain is Sulfate adenylyltransferase from Psychrobacter cryohalolentis (strain ATCC BAA-1226 / DSM 17306 / VKM B-2378 / K5).